Consider the following 208-residue polypeptide: Protein-L-isoaspartate O-methyltransferase (208 aa).

S59 is a catalytic residue.

Belongs to the methyltransferase superfamily. L-isoaspartyl/D-aspartyl protein methyltransferase family.

It localises to the cytoplasm. It catalyses the reaction [protein]-L-isoaspartate + S-adenosyl-L-methionine = [protein]-L-isoaspartate alpha-methyl ester + S-adenosyl-L-homocysteine. Catalyzes the methyl esterification of L-isoaspartyl residues in peptides and proteins that result from spontaneous decomposition of normal L-aspartyl and L-asparaginyl residues. It plays a role in the repair and/or degradation of damaged proteins. The chain is Protein-L-isoaspartate O-methyltransferase from Pectobacterium carotovorum subsp. carotovorum (strain PC1).